The sequence spans 186 residues: Elongation factor P (186 aa).

The protein belongs to the elongation factor P family.

It is found in the cytoplasm. The protein operates within protein biosynthesis; polypeptide chain elongation. Functionally, involved in peptide bond synthesis. Stimulates efficient translation and peptide-bond synthesis on native or reconstituted 70S ribosomes in vitro. Probably functions indirectly by altering the affinity of the ribosome for aminoacyl-tRNA, thus increasing their reactivity as acceptors for peptidyl transferase. This Cupriavidus necator (strain ATCC 17699 / DSM 428 / KCTC 22496 / NCIMB 10442 / H16 / Stanier 337) (Ralstonia eutropha) protein is Elongation factor P.